Consider the following 253-residue polypeptide: Imidazole glycerol phosphate synthase subunit HisF (253 aa).

Active-site residues include Asp-11 and Asp-130.

Belongs to the HisA/HisF family. In terms of assembly, heterodimer of HisH and HisF.

The protein resides in the cytoplasm. It catalyses the reaction 5-[(5-phospho-1-deoxy-D-ribulos-1-ylimino)methylamino]-1-(5-phospho-beta-D-ribosyl)imidazole-4-carboxamide + L-glutamine = D-erythro-1-(imidazol-4-yl)glycerol 3-phosphate + 5-amino-1-(5-phospho-beta-D-ribosyl)imidazole-4-carboxamide + L-glutamate + H(+). It functions in the pathway amino-acid biosynthesis; L-histidine biosynthesis; L-histidine from 5-phospho-alpha-D-ribose 1-diphosphate: step 5/9. IGPS catalyzes the conversion of PRFAR and glutamine to IGP, AICAR and glutamate. The HisF subunit catalyzes the cyclization activity that produces IGP and AICAR from PRFAR using the ammonia provided by the HisH subunit. In Cereibacter sphaeroides (strain KD131 / KCTC 12085) (Rhodobacter sphaeroides), this protein is Imidazole glycerol phosphate synthase subunit HisF.